Consider the following 150-residue polypeptide: Major facilitator superfamily domain-containing 14C pseudogene (150 aa).

The segment at 1–25 is disordered; it reads MSVEPPPELEEKAASEPEAGAMPEK. The Extracellular segment spans residues 1–49; the sequence is MSVEPPPELEEKAASEPEAGAMPEKRAGAQAAGSTWLQGFGPPSVYHAA. The chain crosses the membrane as a helical span at residues 50-70; it reads IVIFLEFFAWGLLTTPMLTVL. At 71 to 82 the chain is on the cytoplasmic side; sequence HETFSQHTFLMN. The helical transmembrane segment at 83–103 threads the bilayer; the sequence is GLIQGVKGLLSFLSAPLIGAL. The Extracellular portion of the chain corresponds to 104 to 111; sequence SDVWGRKP. A helical transmembrane segment spans residues 112–132; that stretch reads FLLGTVFFTCFPIPLMRISPC. At 133–150 the chain is on the cytoplasmic side; it reads RVWWRAPVVPATCGRRMA.

The protein belongs to the major facilitator superfamily.

The protein localises to the membrane. This chain is Major facilitator superfamily domain-containing 14C pseudogene, found in Homo sapiens (Human).